The primary structure comprises 96 residues: Co-chaperonin GroES (96 aa).

This sequence belongs to the GroES chaperonin family. As to quaternary structure, heptamer of 7 subunits arranged in a ring. Interacts with the chaperonin GroEL.

It localises to the cytoplasm. Functionally, together with the chaperonin GroEL, plays an essential role in assisting protein folding. The GroEL-GroES system forms a nano-cage that allows encapsulation of the non-native substrate proteins and provides a physical environment optimized to promote and accelerate protein folding. GroES binds to the apical surface of the GroEL ring, thereby capping the opening of the GroEL channel. In Actinobacillus pleuropneumoniae serotype 7 (strain AP76), this protein is Co-chaperonin GroES.